The following is a 498-amino-acid chain: Membrane-bound lytic murein transglycosylase F (498 aa).

Residues 1–29 (MFFKPDFRPRCAKWLIATGLFLMLGACVE) form the signal peptide. Residues 30-267 (KPTTLERVKE…RLKDRYYGHV (238 aa)) are non-LT domain. The interval 268–498 (DVLGYVGAYT…SSSSTDESPL (231 aa)) is LT domain. Glu-314 is a catalytic residue. Positions 464–498 (VADGNLHVPGVDKTQPPVPPASPVPSSSSTDESPL) are disordered.

The protein in the N-terminal section; belongs to the bacterial solute-binding protein 3 family. In the C-terminal section; belongs to the transglycosylase Slt family.

The protein resides in the cell outer membrane. The enzyme catalyses Exolytic cleavage of the (1-&gt;4)-beta-glycosidic linkage between N-acetylmuramic acid (MurNAc) and N-acetylglucosamine (GlcNAc) residues in peptidoglycan, from either the reducing or the non-reducing ends of the peptidoglycan chains, with concomitant formation of a 1,6-anhydrobond in the MurNAc residue.. In terms of biological role, murein-degrading enzyme that degrades murein glycan strands and insoluble, high-molecular weight murein sacculi, with the concomitant formation of a 1,6-anhydromuramoyl product. Lytic transglycosylases (LTs) play an integral role in the metabolism of the peptidoglycan (PG) sacculus. Their lytic action creates space within the PG sacculus to allow for its expansion as well as for the insertion of various structures such as secretion systems and flagella. The sequence is that of Membrane-bound lytic murein transglycosylase F from Pseudomonas syringae pv. syringae (strain B728a).